The primary structure comprises 330 residues: Polyprenal reductase (330 aa).

Residues 1–16 (MAGWAGFELSALNPLR) lie on the Cytoplasmic side of the membrane. Residues 17-37 (TLWLALAAAFLFALLLQLAPA) traverse the membrane as a helical segment. At 38-80 (RLLPSCALFQDLLRYGKTKQSGSRRPAVCRAFDVPKRYFSHFY) the chain is on the lumenal side. The helical transmembrane segment at 81–101 (VISVVWNGSLLWLLSQSLFLG) threads the bilayer. Residues 102 to 132 (APFPNWLSALLRTLGATQFQALEMESKASRM) are Cytoplasmic-facing. A helical membrane pass occupies residues 133–153 (PAAELALSAFLVLVFLWVHSL). Topologically, residues 154-169 (RRLFECFYVSVFSNAA) are lumenal. Residues 170 to 190 (IHVVQYCFGLVYYVLVGLTVL) form a helical membrane-spanning segment. The Cytoplasmic portion of the chain corresponds to 191-206 (SQVPMDDKNVYVLGKN). Residues 207-227 (LLIQARWFHILGMVMFFWSSA) form a helical membrane-spanning segment. Topologically, residues 228-277 (HQYKCHVILSNLRRNKKGVVIHCQHRIPFGDWFEYVSSANYLAELMIYIS) are lumenal. Residues 278–298 (MAVTFGLHNLTWWLVVTYVFS) form a helical membrane-spanning segment. Residues 299 to 330 (SQALSAFFNHKFYRSTFVSYPKHRKAFLPFLF) are Cytoplasmic-facing.

The protein belongs to the steroid 5-alpha reductase family. Polyprenal reductase subfamily.

It is found in the endoplasmic reticulum membrane. It carries out the reaction a di-trans,poly-cis-dolichal + NADP(+) = a di-trans,poly-cis-polyprenal + NADPH + H(+). The catalysed reaction is a 3-oxo-5alpha-steroid + NADP(+) = a 3-oxo-Delta(4)-steroid + NADPH + H(+). The enzyme catalyses androst-4-ene-3,17-dione + NADPH + H(+) = 5alpha-androstan-3,17-dione + NADP(+). It catalyses the reaction 17beta-hydroxy-5alpha-androstan-3-one + NADP(+) = testosterone + NADPH + H(+). Its pathway is protein modification; protein glycosylation. Functionally, plays a key role in early steps of protein N-linked glycosylation by being involved in the conversion of polyprenol into dolichol. Acts as a polyprenal reductase that mediates the reduction of polyprenal into dolichal in a NADP-dependent mechanism. Dolichols are required for the synthesis of dolichol-linked monosaccharides and the oligosaccharide precursor used for N-glycosylation. Also able to convert testosterone (T) into 5-alpha-dihydrotestosterone (DHT). The sequence is that of Polyprenal reductase from Mus musculus (Mouse).